Here is a 338-residue protein sequence, read N- to C-terminus: Fructose-1,6-bisphosphatase 1 (338 aa).

N-acetylthreonine is present on threonine 2. AMP contacts are provided by residues 18-22 (VMEEG) and 28-32 (TGEMT). Mg(2+)-binding residues include aspartate 69 and glutamate 98. AMP is bound at residue 113–114 (KY). Residues aspartate 119, leucine 121, and aspartate 122 each coordinate Mg(2+). Substrate is bound at residue 122–125 (DGSS). Lysine 141 provides a ligand contact to AMP. N6-succinyllysine is present on lysine 151. Serine 208 carries the post-translational modification Phosphoserine. Substrate is bound by residues 213 to 216 (NEGY), 244 to 249 (RYVGSM), tyrosine 265, and 275 to 277 (KLR). Tyrosine 216, tyrosine 245, and tyrosine 265 each carry phosphotyrosine. A Mg(2+)-binding site is contributed by glutamate 281.

It belongs to the FBPase class 1 family. As to quaternary structure, homotetramer. Requires Mg(2+) as cofactor.

The catalysed reaction is beta-D-fructose 1,6-bisphosphate + H2O = beta-D-fructose 6-phosphate + phosphate. Its pathway is carbohydrate biosynthesis; gluconeogenesis. Subject to complex allosteric regulation. The enzyme can assume an active R-state, or an inactive T-state. Intermediate conformations may exist. AMP acts as an allosteric inhibitor. AMP binding affects the turnover of bound substrate and not the affinity for substrate. Fructose 2,6-bisphosphate acts as a competitive inhibitor. Fructose 2,6-bisphosphate and AMP have synergistic effects. Functionally, catalyzes the hydrolysis of fructose 1,6-bisphosphate to fructose 6-phosphate in the presence of divalent cations, acting as a rate-limiting enzyme in gluconeogenesis. Plays a role in regulating glucose sensing and insulin secretion of pancreatic beta-cells. Appears to modulate glycerol gluconeogenesis in liver. Important regulator of appetite and adiposity; increased expression of the protein in liver after nutrient excess increases circulating satiety hormones and reduces appetite-stimulating neuropeptides and thus seems to provide a feedback mechanism to limit weight gain. The chain is Fructose-1,6-bisphosphatase 1 (FBP1) from Bos taurus (Bovine).